Consider the following 530-residue polypeptide: Bifunctional purine biosynthesis protein PurH (530 aa).

Residues 1 to 148 form the MGS-like domain; it reads MNNARPIRRA…KNHKDVTIVV (148 aa).

The protein belongs to the PurH family.

It catalyses the reaction (6R)-10-formyltetrahydrofolate + 5-amino-1-(5-phospho-beta-D-ribosyl)imidazole-4-carboxamide = 5-formamido-1-(5-phospho-D-ribosyl)imidazole-4-carboxamide + (6S)-5,6,7,8-tetrahydrofolate. It carries out the reaction IMP + H2O = 5-formamido-1-(5-phospho-D-ribosyl)imidazole-4-carboxamide. Its pathway is purine metabolism; IMP biosynthesis via de novo pathway; 5-formamido-1-(5-phospho-D-ribosyl)imidazole-4-carboxamide from 5-amino-1-(5-phospho-D-ribosyl)imidazole-4-carboxamide (10-formyl THF route): step 1/1. It participates in purine metabolism; IMP biosynthesis via de novo pathway; IMP from 5-formamido-1-(5-phospho-D-ribosyl)imidazole-4-carboxamide: step 1/1. The chain is Bifunctional purine biosynthesis protein PurH from Vibrio campbellii (strain ATCC BAA-1116).